A 71-amino-acid chain; its full sequence is Large ribosomal subunit protein bL31 (71 aa).

4 residues coordinate Zn(2+): Cys-16, Cys-18, Cys-38, and Cys-41.

This sequence belongs to the bacterial ribosomal protein bL31 family. Type A subfamily. Part of the 50S ribosomal subunit. Zn(2+) serves as cofactor.

Binds the 23S rRNA. The sequence is that of Large ribosomal subunit protein bL31 from Neisseria meningitidis serogroup A / serotype 4A (strain DSM 15465 / Z2491).